The chain runs to 1114 residues: Translation initiation factor IF-2 (1114 aa).

Disordered stretches follow at residues 69–102 and 181–507; these read SIKKDNFKQNKSPSISSKKETPLKDNSNKKPLLI and INNN…KRRA. The span at 85–96 shows a compositional bias: basic and acidic residues; the sequence is SKKETPLKDNSN. The segment covering 181–198 has biased composition (polar residues); the sequence is INNNVKSNESSQNISSAG. Over residues 240 to 251 the composition is skewed to low complexity; sequence INPNKQNNKQNI. The segment covering 252–261 has biased composition (polar residues); it reads AFKQTGSNRI. Low complexity-rich tracts occupy residues 262 to 278, 290 to 309, and 321 to 337; these read GSPNRPGMPNNRPGLRN, NRQGNPNRPGMPNNRPGLRN, and NRQGNPNRPGMPNNRPG. The segment covering 365-375 has biased composition (basic and acidic residues); the sequence is NSEKDNKDKNN. Residues 376 to 385 show a composition bias toward low complexity; the sequence is NAKQNINGPN. Basic and acidic residues predominate over residues 417 to 431; that stretch reads GKTDWDDSAKLEALR. A compositionally biased stretch (basic residues) spans 489–505; that stretch reads KQFKKKKKETTRQRQKR. The 173-residue stretch at 606-778 folds into the tr-type G domain; that stretch reads RRPPVITVMG…ILLVSEVEDL (173 aa). The interval 615-622 is G1; the sequence is GHVDHGKT. 615-622 provides a ligand contact to GTP; it reads GHVDHGKT. Residues 640–644 are G2; that stretch reads GITQH. Residues 665 to 668 are G3; the sequence is DTPG. Residues 665–669 and 719–722 contribute to the GTP site; these read DTPGH and NKID. Residues 719 to 722 form a G4 region; it reads NKID. Residues 755-757 form a G5 region; sequence SAI.

The protein belongs to the TRAFAC class translation factor GTPase superfamily. Classic translation factor GTPase family. IF-2 subfamily.

It localises to the cytoplasm. One of the essential components for the initiation of protein synthesis. Protects formylmethionyl-tRNA from spontaneous hydrolysis and promotes its binding to the 30S ribosomal subunits. Also involved in the hydrolysis of GTP during the formation of the 70S ribosomal complex. The protein is Translation initiation factor IF-2 of Prochlorococcus marinus (strain MIT 9301).